The sequence spans 226 residues: RPA-interacting protein A (226 aa).

The segment at 1–45 is interaction with importin beta; that stretch reads MEAERRHRALYKGTTPPWKETYRKRCVERLKRNRSKLLDKFRQVG. The interaction with RPA1 stretch occupies residues 49–171; the sequence is HGGVGGSFLV…QCGVYINTQS (123 aa). The segment at 144-219 adopts an RIP-type zinc-finger fold; the sequence is CPVCNRNYLT…ASLFMSCQEC (76 aa).

Interacts directly with the rpa1 subunit of RPA complex. Interacts with importin beta, but not with importin alpha. Forms a complex with the RPA complex and importin beta, which is dissociated by Ran-GTP.

The protein localises to the nucleus. In terms of biological role, mediates the import of RPA complex into the nucleus, via its interaction with importin beta. This chain is RPA-interacting protein A (rpain-a), found in Xenopus laevis (African clawed frog).